A 129-amino-acid polypeptide reads, in one-letter code: C-type natriuretic peptide 1 (129 aa).

The first 24 residues, 1–24 (MSYKRGTCLGFIMLLMVSHHHTKG), serve as a signal peptide directing secretion. A propeptide spanning residues 25-107 (KPLSSLQNLS…SRRYRQRNKK (83 aa)) is cleaved from the precursor. Cys-113 and Cys-129 are joined by a disulfide.

It belongs to the natriuretic peptide family.

Its subcellular location is the secreted. Functionally, hormone which plays a role in endochondral ossification through regulation of cartilaginous growth plate chondrocytes proliferation and differentiation. May also be vasoactive and natriuretic. May be important for freshwater adaptation. The chain is C-type natriuretic peptide 1 from Aquarana catesbeiana (American bullfrog).